A 330-amino-acid chain; its full sequence is MEITFLPLILLGAAVLLLAIFFYYVPFLLWISAKVSGVNISLIQLFLMRIRKVPPYIITRAMIEAHKAGIKTLTRDELEAHYLAGGHVEKVVHALVSASKANIDLPFQMATAIDLAGRDVFEAVQMSVNPKVIDTPPVTAVAKDGIQLIAKARVTVRANIKQLVGGAGEETILARVGEGIVSSIGSSESHKTVLENPDSISKLVLRKGLDAGTAFEILSIDIADIDIGKNIGAFLQMDQAQADKNIAQAKAEERRAMAVALEQEMKAKAQEARAKVIEAEAEVPKAMADAFRTGNLGVMDYYKMKNIEADTSMREAIAKPTGAPSKPLKD.

Helical transmembrane passes span 5–25 and 27–47; these read FLPL…FYYV and FLLW…QLFL.

The protein belongs to the flotillin-like FloA family. Homooligomerizes.

It localises to the cell membrane. Its subcellular location is the membrane raft. Its function is as follows. Found in functional membrane microdomains (FMM) that may be equivalent to eukaryotic membrane rafts. FMMs are highly dynamic and increase in number as cells age. Flotillins are thought to be important factors in membrane fluidity. In Parabacteroides distasonis (strain ATCC 8503 / DSM 20701 / CIP 104284 / JCM 5825 / NCTC 11152), this protein is Flotillin-like protein FloA.